The chain runs to 245 residues: Terpene cyclase ausL (245 aa).

A run of 7 helical transmembrane segments spans residues 17-37 (ILAI…VNYI), 51-71 (IGIL…WMFP), 76-96 (HWQG…LVTL), 113-133 (IVFI…ALAA), 138-158 (ALGF…GGIA), 170-190 (SYLI…KLCI), and 206-226 (MCWF…FLYF).

Belongs to the paxB family.

Its subcellular location is the membrane. Its pathway is secondary metabolite biosynthesis; terpenoid biosynthesis. In terms of biological role, terpene cyclase; part of the gene cluster A that mediates the biosynthesis of the fungal meroterpenoid acetoxydehydroaustin. The first step of the pathway is the synthesis of 3,5-dimethylorsellinic acid by the polyketide synthase ausA. 3,5-dimethylorsellinic acid is then prenylated by the polyprenyl transferase ausN. Further epoxidation by the FAD-dependent monooxygenase ausM and cyclization by the probable terpene cyclase ausL lead to the formation of protoaustinoid A. Protoaustinoid A is then oxidized to spiro-lactone preaustinoid A3 by the combined action of the FAD-binding monooxygenases ausB and ausC, and the dioxygenase ausE. Acid-catalyzed keto-rearrangement and ring contraction of the tetraketide portion of preaustinoid A3 by ausJ lead to the formation of preaustinoid A4. The aldo-keto reductase ausK, with the help of ausH, is involved in the next step by transforming preaustinoid A4 into isoaustinone which is in turn hydroxylated by the P450 monooxygenase ausI to form austinolide. The cytochrome P450 monooxygenase ausG then modifies austinolide to austinol. Austinol is further acetylated to austin by the O-acetyltransferase ausP, which spontaneously changes to dehydroaustin. The cytochrome P450 monooxygenase then converts dehydroaustin is into 7-dehydrodehydroaustin. The hydroxylation catalyzed by ausR permits the second O-acetyltransferase ausQ to add an additional acetyl group to the molecule, leading to the formation of acetoxydehydroaustin. Due to genetic rearrangements of the clusters and the subsequent loss of some enzymes, the end product of the Penicillium brasilianum austinoid biosynthesis clusters is acetoxydehydroaustin. This chain is Terpene cyclase ausL, found in Penicillium brasilianum.